The sequence spans 46 residues: U-limacoditoxin(6)-Dv61 (46 aa).

A signal peptide spans 1–19 (MSKLLVLLMTTALATLAQA).

This sequence belongs to the limacoditoxin-6 family. In terms of tissue distribution, expressed by the venom secretory cell of the spine. The spine is a cuticular structure containing a single large nucleated venom-secreting cell at its base. It is an independent unit capable of producing, storing and injecting venom. On the back of D.vulnerans caterpillars, spines are grouped together by 50 to 100 to form scoli, of which there are eight in D.vulnerans.

It localises to the secreted. Functionally, probable toxin. Does not show insecticidal, antimicrobial and antiparasitic activities. Does not induce increase in intracellular calcium in mouse DRG neurons, suggesting that it does not induce pain. The polypeptide is U-limacoditoxin(6)-Dv61 (Doratifera vulnerans (Mottled cup moth)).